The following is a 280-amino-acid chain: MIEVTLLGTGSPIPDPNRAGPSTLVRAGGQVFLVDCGRGVLQRAAAGGVGAAGLSALLLTHLHSDHVGDLGDVLITRWISTFTPDPVPLPIIGPPGTAELVAATLNALRHDIGYRIAHHADLNAPPAVDVREHTDGPVWDRDGVSIRVAPTDHRPVAPTIGFRVEYQGASVVLAGDTVPCAGLDELAAGAGALVHTVIRKDIVATIPQQRLQDICDYHSSVEEAAATAARAGVGTLVMTHYVPALVAGQEEQWRALAAREFAGRVELGDDLHRVQVDAPS.

Zn(2+) is bound by residues H61, H63, D65, H66, H153, D176, and H240. Residue D65 is the Proton acceptor of the active site.

It belongs to the RNase Z family. Homodimer. Requires Zn(2+) as cofactor.

The catalysed reaction is Endonucleolytic cleavage of RNA, removing extra 3' nucleotides from tRNA precursor, generating 3' termini of tRNAs. A 3'-hydroxy group is left at the tRNA terminus and a 5'-phosphoryl group is left at the trailer molecule.. Zinc phosphodiesterase, which displays some tRNA 3'-processing endonuclease activity. Probably involved in tRNA maturation, by removing a 3'-trailer from precursor tRNA. The protein is Ribonuclease Z of Mycolicibacterium paratuberculosis (strain ATCC BAA-968 / K-10) (Mycobacterium paratuberculosis).